The sequence spans 89 residues: Mitochondrial import inner membrane translocase subunit Tim9 (89 aa).

A2 is modified (N-acetylalanine). Residues 28–52 (CFLDCVKDFTTREVKPEEVTCSEHC) carry the Twin CX3C motif motif. Intrachain disulfides connect C28/C52 and C32/C48.

Belongs to the small Tim family. In terms of assembly, heterohexamer; composed of 3 copies of TIMM9 and 3 copies of TIMM10/TIM10A, named soluble 70 kDa complex. The complex forms a 6-bladed alpha-propeller structure and associates with the TIMM22 component of the TIM22 complex. Interacts with multi-pass transmembrane proteins in transit. Also forms a complex composed of TIMM9, TIMM10/TIM10A and FXC1/TIM10B.

The protein resides in the mitochondrion inner membrane. Functionally, mitochondrial intermembrane chaperone that participates in the import and insertion of multi-pass transmembrane proteins into the mitochondrial inner membrane. May also be required for the transfer of beta-barrel precursors from the TOM complex to the sorting and assembly machinery (SAM complex) of the outer membrane. Acts as a chaperone-like protein that protects the hydrophobic precursors from aggregation and guide them through the mitochondrial intermembrane space. In Rattus norvegicus (Rat), this protein is Mitochondrial import inner membrane translocase subunit Tim9 (Timm9).